Reading from the N-terminus, the 220-residue chain is 7-cyano-7-deazaguanine synthase (220 aa).

Phe-10–Leu-20 contributes to the ATP binding site. Residues Cys-186, Cys-195, Cys-198, and Cys-201 each coordinate Zn(2+).

This sequence belongs to the QueC family. In terms of assembly, homodimer. Zn(2+) serves as cofactor.

The catalysed reaction is 7-carboxy-7-deazaguanine + NH4(+) + ATP = 7-cyano-7-deazaguanine + ADP + phosphate + H2O + H(+). It functions in the pathway purine metabolism; 7-cyano-7-deazaguanine biosynthesis. Its function is as follows. Catalyzes the ATP-dependent conversion of 7-carboxy-7-deazaguanine (CDG) to 7-cyano-7-deazaguanine (preQ(0)). The sequence is that of 7-cyano-7-deazaguanine synthase from Bacillus cereus (strain ATCC 14579 / DSM 31 / CCUG 7414 / JCM 2152 / NBRC 15305 / NCIMB 9373 / NCTC 2599 / NRRL B-3711).